Reading from the N-terminus, the 374-residue chain is Arf-GAP with dual PH domain-containing protein 1 (374 aa).

The Arf-GAP domain maps to 7-126 (RAVLELLQRP…EFIYPEKQEP (120 aa)). The segment at 21–44 (CADCGAPDPDWASYTLGVFICLSC) adopts a C4-type zinc-finger fold. At S87 the chain carries Phosphoserine; by PKC. PH domains lie at 129 to 230 (AGYR…AARF) and 252 to 356 (NYLK…KAVD). N6-acetyllysine is present on K272. T276 carries the post-translational modification Phosphothreonine; by PKC.

Interacts with PRKCA, PRKCI and PRKCZ. Interacts with the N-terminal region of PRKD1. In terms of processing, phosphorylated by PRKCA, PRKCI, PRKCZ and PRKD1 in vitro. As to expression, expressed at highest levels in brain and at lower levels in peripheral blood leukocytes.

The protein localises to the nucleus. Its subcellular location is the cytoplasm. Functionally, GTPase-activating protein for the ADP ribosylation factor family. Binds phosphatidylinositol 3,4,5-trisphosphate (PtdInsP3) and inositol 1,3,4,5-tetrakisphosphate (InsP4). Regulates the incorporation of CD63 and CD9 into multivesicular bodies. The chain is Arf-GAP with dual PH domain-containing protein 1 (ADAP1) from Homo sapiens (Human).